The primary structure comprises 215 residues: Adenylate kinase (215 aa).

10 to 15 (GAGKGT) contacts ATP. Positions 30–59 (STGDIFRKNISENTPLGMEARSYMDKGLLV) are NMP. Residues threonine 31, arginine 36, 57 to 59 (LLV), 85 to 88 (GFPR), and glutamine 92 contribute to the AMP site. The segment at 126-163 (GRRVCTSCGGSFHIKFNPPTIDGKCNLCGSDIVQRKDD) is LID. Residue arginine 127 participates in ATP binding. The Zn(2+) site is built by cysteine 130 and cysteine 133. 136–137 (SF) serves as a coordination point for ATP. Zn(2+) is bound by residues cysteine 150 and cysteine 153. AMP contacts are provided by arginine 160 and arginine 171. An ATP-binding site is contributed by lysine 199.

Belongs to the adenylate kinase family. As to quaternary structure, monomer.

The protein localises to the cytoplasm. It carries out the reaction AMP + ATP = 2 ADP. Its pathway is purine metabolism; AMP biosynthesis via salvage pathway; AMP from ADP: step 1/1. Functionally, catalyzes the reversible transfer of the terminal phosphate group between ATP and AMP. Plays an important role in cellular energy homeostasis and in adenine nucleotide metabolism. In Clostridium botulinum (strain Alaska E43 / Type E3), this protein is Adenylate kinase.